The primary structure comprises 93 residues: MRLFILSLFALLVMFQYDFWFGKNGYLDYQDIKAEIIQRKQENKKLSQRNQTIFAEIQDLKNGIEAIEERARMEHEMIKQNEVFYRIVKNKNR.

Residues 1 to 3 (MRL) lie on the Cytoplasmic side of the membrane. A helical membrane pass occupies residues 4–21 (FILSLFALLVMFQYDFWF). Residues 22 to 93 (GKNGYLDYQD…FYRIVKNKNR (72 aa)) are Periplasmic-facing. Residues 28–76 (DYQDIKAEIIQRKQENKKLSQRNQTIFAEIQDLKNGIEAIEERARMEHE) are a coiled coil.

This sequence belongs to the FtsB family. In terms of assembly, part of a complex composed of FtsB, FtsL and FtsQ.

It localises to the cell inner membrane. Essential cell division protein. May link together the upstream cell division proteins, which are predominantly cytoplasmic, with the downstream cell division proteins, which are predominantly periplasmic. The sequence is that of Cell division protein FtsB from Histophilus somni (strain 129Pt) (Haemophilus somnus).